The primary structure comprises 646 residues: Acetyl-coenzyme A synthetase (646 aa).

Residues 190–193 (RAGK) and T309 contribute to the CoA site. ATP contacts are provided by residues 385–387 (GEP), 409–414 (DTWWQT), D498, and R513. S521 provides a ligand contact to CoA. R524 is an ATP binding site. Mg(2+)-binding residues include V535, H537, and V540. R582 contributes to the CoA binding site. Residue K607 is modified to N6-acetyllysine.

Belongs to the ATP-dependent AMP-binding enzyme family. Mg(2+) serves as cofactor. In terms of processing, acetylated. Deacetylation by the SIR2-homolog deacetylase activates the enzyme.

It catalyses the reaction acetate + ATP + CoA = acetyl-CoA + AMP + diphosphate. Its function is as follows. Catalyzes the conversion of acetate into acetyl-CoA (AcCoA), an essential intermediate at the junction of anabolic and catabolic pathways. AcsA undergoes a two-step reaction. In the first half reaction, AcsA combines acetate with ATP to form acetyl-adenylate (AcAMP) intermediate. In the second half reaction, it can then transfer the acetyl group from AcAMP to the sulfhydryl group of CoA, forming the product AcCoA. In Pseudoalteromonas atlantica (strain T6c / ATCC BAA-1087), this protein is Acetyl-coenzyme A synthetase.